A 483-amino-acid polypeptide reads, in one-letter code: Glutamyl-tRNA(Gln) amidotransferase subunit A (483 aa).

Active-site charge relay system residues include K77 and S152. The Acyl-ester intermediate role is filled by S176.

It belongs to the amidase family. GatA subfamily. In terms of assembly, heterotrimer of A, B and C subunits.

It catalyses the reaction L-glutamyl-tRNA(Gln) + L-glutamine + ATP + H2O = L-glutaminyl-tRNA(Gln) + L-glutamate + ADP + phosphate + H(+). In terms of biological role, allows the formation of correctly charged Gln-tRNA(Gln) through the transamidation of misacylated Glu-tRNA(Gln) in organisms which lack glutaminyl-tRNA synthetase. The reaction takes place in the presence of glutamine and ATP through an activated gamma-phospho-Glu-tRNA(Gln). In Listeria monocytogenes serotype 4b (strain CLIP80459), this protein is Glutamyl-tRNA(Gln) amidotransferase subunit A.